We begin with the raw amino-acid sequence, 122 residues long: Small ribosomal subunit protein uS13 (122 aa).

Residues 96 to 122 (LPCRGQRTHTNARTRKGPRKPIAGKKK) are disordered.

This sequence belongs to the universal ribosomal protein uS13 family. As to quaternary structure, part of the 30S ribosomal subunit. Forms a loose heterodimer with protein S19. Forms two bridges to the 50S subunit in the 70S ribosome.

Functionally, located at the top of the head of the 30S subunit, it contacts several helices of the 16S rRNA. In the 70S ribosome it contacts the 23S rRNA (bridge B1a) and protein L5 of the 50S subunit (bridge B1b), connecting the 2 subunits; these bridges are implicated in subunit movement. Contacts the tRNAs in the A and P-sites. This chain is Small ribosomal subunit protein uS13, found in Magnetococcus marinus (strain ATCC BAA-1437 / JCM 17883 / MC-1).